Consider the following 97-residue polypeptide: Co-chaperonin GroES (97 aa).

Belongs to the GroES chaperonin family. In terms of assembly, heptamer of 7 subunits arranged in a ring. Interacts with the chaperonin GroEL.

It localises to the cytoplasm. Functionally, together with the chaperonin GroEL, plays an essential role in assisting protein folding. The GroEL-GroES system forms a nano-cage that allows encapsulation of the non-native substrate proteins and provides a physical environment optimized to promote and accelerate protein folding. GroES binds to the apical surface of the GroEL ring, thereby capping the opening of the GroEL channel. The protein is Co-chaperonin GroES of Blochmanniella pennsylvanica (strain BPEN).